A 193-amino-acid chain; its full sequence is 7-methyl-GTP pyrophosphatase (193 aa).

Catalysis depends on Asp-70, which acts as the Proton acceptor.

This sequence belongs to the Maf family. YceF subfamily. The cofactor is a divalent metal cation.

It is found in the cytoplasm. The enzyme catalyses N(7)-methyl-GTP + H2O = N(7)-methyl-GMP + diphosphate + H(+). Nucleoside triphosphate pyrophosphatase that hydrolyzes 7-methyl-GTP (m(7)GTP). May have a dual role in cell division arrest and in preventing the incorporation of modified nucleotides into cellular nucleic acids. In Photobacterium profundum (strain SS9), this protein is 7-methyl-GTP pyrophosphatase.